Reading from the N-terminus, the 191-residue chain is GDP-mannose pyrophosphatase (191 aa).

GDP-alpha-D-mannose contacts are provided by residues Tyr17, 38-40, Arg67, and 85-87; these read KRE and AGL. A Nudix hydrolase domain is found at 43–180; that stretch reads DRGNGATILL…EIRDGKTVLL (138 aa). The Mg(2+) site is built by Ala85, Glu100, and Glu104. Residues 86–106 carry the Nudix box motif; it reads GLLDNDEPEVCIRKEAIEETG. Residues Glu104, Glu127, 150–151, and Lys176 contribute to the GDP-alpha-D-mannose site; that span reads DE. Glu151 lines the Mg(2+) pocket.

The protein belongs to the Nudix hydrolase family. NudK subfamily. In terms of assembly, homodimer. Requires Mg(2+) as cofactor.

The catalysed reaction is GDP-alpha-D-mannose + H2O = alpha-D-mannose 1-phosphate + GMP + 2 H(+). Nucleoside diphosphate sugar hydrolase that hydrolyzes GDP-mannose as its preferred substrate, yielding GMP and mannose-1-phosphate. The protein is GDP-mannose pyrophosphatase (nudK) of Salmonella choleraesuis (strain SC-B67).